Here is an 801-residue protein sequence, read N- to C-terminus: Protein SDA1 homolog (801 aa).

Disordered stretches follow at residues 1 to 40, 495 to 517, 536 to 647, and 739 to 801; these read MGKV…ASRF, RKDR…FARP, GEQG…SKNS, and DYKF…RKPQ. Polar residues predominate over residues 24–40; sequence KSNAPTEGSNSGKASRF. 2 stretches are compositionally biased toward acidic residues: residues 544 to 568 and 583 to 633; these read DGTD…DADE and NDAE…EASE. 2 stretches are compositionally biased toward basic residues: residues 770–779 and 787–801; these read NKIRGRNRQR and SLRH…RKPQ.

Belongs to the SDA1 family.

It localises to the nucleus. In terms of biological role, required for 60S pre-ribosomal subunits export to the cytoplasm. Required for normal somatic gonad development and for regulation of germline development and proliferation. The protein is Protein SDA1 homolog (pro-3) of Caenorhabditis elegans.